The primary structure comprises 508 residues: 2'-5'-oligoadenylate synthase-like protein 2 (508 aa).

Serine 69 is an ATP binding site. Mg(2+)-binding residues include aspartate 81, aspartate 83, and aspartate 154. 2 residues coordinate ATP: arginine 213 and lysine 216. The Ubiquitin-like domain maps to 435–473 (ILVFVKYPGGQSKPFTIDPDDTILDLKEKIEDAGGPCAE).

The protein belongs to the 2-5A synthase family. Mg(2+) is required as a cofactor. Strongly expressed in spleen dendritic cells, whereas, in bone marrow-derived dendritic cells, the amount increases during the maturation process. Expressed in many organs, the highest levels being in thymus, lung, and bone marrow.

It carries out the reaction 3 ATP = 5'-triphosphoadenylyl-(2'-&gt;5')-adenylyl-(2'-&gt;5')-adenosine + 2 diphosphate. With respect to regulation, produced as a latent enzyme which is activated by dsRNA generated during the course of viral infection. The dsRNA activator must be at least 15 nucleotides long, and no modification of the 2'-hydroxyl group is tolerated. ssRNA or dsDNA do not act as activators. Interferon-induced, dsRNA-activated antiviral enzyme which plays a critical role in cellular innate antiviral response. Synthesizes oligomers of 2'-5'-oligoadenylates (2-5A) from ATP which then bind to the inactive monomeric form of ribonuclease L (RNase L) leading to its dimerization and subsequent activation. Activation of RNase L leads to degradation of cellular as well as viral RNA, resulting in the inhibition of protein synthesis, thus terminating viral replication. Can mediate the antiviral effect via the classical RNase L-dependent pathway or an alternative antiviral pathway independent of RNase L. This Mus musculus (Mouse) protein is 2'-5'-oligoadenylate synthase-like protein 2 (Oasl2).